A 310-amino-acid polypeptide reads, in one-letter code: Taste receptor type 2 member 125 (310 aa).

Residues 1 to 2 (MG) are Extracellular-facing. The helical transmembrane segment at 3–23 (IVIGIICAFIIIVQFIIGNVA) threads the bilayer. Residues 24–46 (NGFIALVNIIDWVKRRKISLVDQ) lie on the Cytoplasmic side of the membrane. The helical transmembrane segment at 47–67 (IITALAISRIDMLCSTFLIVL) threads the bilayer. The Extracellular portion of the chain corresponds to 68–87 (ITSLYPDLNTAVNMVKISNN). The helical transmembrane segment at 88–108 (IWIVANHFSIWLATSLSIFYF) threads the bilayer. Over 109 to 128 (LKIANFSNYVFLCLRWRLSK) the chain is Cytoplasmic. The chain crosses the membrane as a helical span at residues 129–149 (VVSVTLLLSLVLLLMNILIMN). Over 150-185 (MHIDTWSDGFKRNVSFGFRSKNCTRFFKLALLINTT) the chain is Extracellular. N-linked (GlcNAc...) asparagine glycosylation is found at Asn-162, Asn-171, and Asn-183. A helical membrane pass occupies residues 186-206 (FTCVPFTVSMVAFLLLIFSLW). At 207-232 (RHLKNMQYHAKGSRDPSTAVHIKALQ) the chain is on the cytoplasmic side. The chain crosses the membrane as a helical span at residues 233 to 253 (MVVVFVLFYTFFFLSLAIQLW). At 254–261 (TSESLEKN) the chain is on the extracellular side. The chain crosses the membrane as a helical span at residues 262 to 282 (NLFYVTLIITFPSVHSCMLIL). Residues 283 to 310 (RNSKLRQASLLVLWWLLCRSKDIQTLVP) lie on the Cytoplasmic side of the membrane.

It belongs to the G-protein coupled receptor T2R family.

It is found in the membrane. In terms of biological role, putative taste receptor which may play a role in the perception of bitterness. The polypeptide is Taste receptor type 2 member 125 (Rattus norvegicus (Rat)).